A 95-amino-acid chain; its full sequence is MKIEVIKRDKNLLEFYLVGEDHTFANLLSETLHENKHVTFAAYTIEHPVLMARKPRFRISTDGKITPEKALEEAAQKIFDRAKDVLEVWEGVIKK.

It belongs to the archaeal Rpo11/eukaryotic RPB11/RPC19 RNA polymerase subunit family. In terms of assembly, part of the RNA polymerase complex.

It is found in the cytoplasm. It carries out the reaction RNA(n) + a ribonucleoside 5'-triphosphate = RNA(n+1) + diphosphate. Functionally, DNA-dependent RNA polymerase (RNAP) catalyzes the transcription of DNA into RNA using the four ribonucleoside triphosphates as substrates. The chain is DNA-directed RNA polymerase subunit Rpo11 from Thermococcus sibiricus (strain DSM 12597 / MM 739).